The chain runs to 198 residues: Protein UNCMA_24250 (198 aa).

One can recognise an AMMECR1 domain in the interval 5–194 (EDGTLAVKTA…ETEPGGPVIE (190 aa)).

In Methanocella arvoryzae (strain DSM 22066 / NBRC 105507 / MRE50), this protein is Protein UNCMA_24250.